Here is a 1097-residue protein sequence, read N- to C-terminus: MATQVMGQSSGGGGLFTSSGNIGMALPNDMYDLHDLSKAELAAPQLIMLANVALTGEVNGSCCDYLVGEERQMAELMPVGDNNFSDSEEGEGLEESADIKGEPHGLENMELRSLELSVVEPQPVFEASGAPDIYSSNKDLPPETPGAEDKGKSSKTKPFRCKPCQYEAESEEQFVHHIRVHSAKKFFVEESAEKQAKARESGSSTAEEGDFSKGPIRCDRCGYNTNRYDHYTAHLKHHTRAGDNERVYKCIICTYTTVSEYHWRKHLRNHFPRKVYTCGKCNYFSDRKNNYVQHVRTHTGERPYKCELCPYSSSQKTHLTRHMRTHSGEKPFKCDQCSYVASNQHEVTRHARQVHNGPKPLNCPHCDYKTADRSNFKKHVELHVNPRQFNCPVCDYAASKKCNLQYHFKSKHPTCPNKTMDVSKVKLKKTKKREADLPDNITNEKTEIEQTKIKGDVAGKKNEKSVKAEKRDVSKEKKPSNNVSVIQVTTRTRKSVTEVKEMDVHTGSNSEKFSKTKKSKRKLEVDSHSLHGPVNDEESSTKKKKKVESKSKNNSQEVPKGDSKVEENKKQNTCMKKSTKKKTLKNKSSKKSSKPPQKEPVEKGSAQMDPPQMGPAPTEAVQKGPVQVEPPPPMEHAQMEGAQIRPAPDEPVQMEVVQEGPAQKELLPPVEPAQMVGAQIVLAHMELPPPMETAQTEVAQMGPAPMEPAQMEVAQVESAPMQVVQKEPVQMELSPPMEVVQKEPVQIELSPPMEVVQKEPVKIELSPPIEVVQKEPVQMELSPPMGVVQKEPAQREPPPPREPPLHMEPISKKPPLRKDKKEKSNMQSERARKEQVLIEVGLVPVKDSWLLKESVSTEDLSPPSPPLPKENLREEASGDQKLLNTGEGNKEAPLQKVGAEEADESLPGLAANINESTHISSSGQNLNTPEGETLNGKHQTDSIVCEMKMDTDQNTRENLTGINSTVEEPVSPMLPPSAVEEREAVSKTALASPPATMAANESQEIDEDEGIHSHEGSDLSDNMSEGSDDSGLHGARPVPQESSRKNAKEALAVKAAKGDFVCIFCDRSFRKGKDYSKHLNRHLVNVYYLEEAAQGQE.

Residues 32–122 (DLHDLSKAEL…SLELSVVEPQ (91 aa)) are interaction with SIN3A. The segment at 43-57 (APQLIMLANVALTGE) is interaction with SIN3B. Disordered regions lie at residues 83–103 (NFSD…KGEP) and 127–159 (ASGA…TKPF). Residues 86–96 (DSEEGEGLEES) are compositionally biased toward acidic residues. Positions 145–418 (PGAEDKGKSS…KSKHPTCPNK (274 aa)) are interaction with ZFP90. The segment at 159-181 (FRCKPCQYEAESEEQFVHHIRVH) adopts a C2H2-type 1 zinc-finger fold. A required for binding to the neuron-restrictive silencer element region spans residues 201-212 (SGSSTAEEGDFS). 7 C2H2-type zinc fingers span residues 216-238 (IRCD…LKHH), 248-270 (YKCI…LRNH), 276-298 (YTCG…VRTH), 304-326 (YKCE…MRTH), 332-355 (FKCD…RQVH), 361-383 (LNCP…VELH), and 389-412 (FNCP…KSKH). Positions 452 to 479 (KIKGDVAGKKNEKSVKAEKRDVSKEKKP) are enriched in basic and acidic residues. 4 disordered regions span residues 452–642 (KIKG…MEGA), 774–837 (KEPV…EQVL), 853–938 (ESVS…NGKH), and 961–1049 (GINS…NAKE). The span at 480 to 490 (SNNVSVIQVTT) shows a compositional bias: polar residues. Composition is skewed to basic and acidic residues over residues 495 to 504 (SVTEVKEMDV) and 559 to 570 (PKGDSKVEENKK). Positions 577 to 593 (KSTKKKTLKNKSSKKSS) are enriched in basic residues. Over residues 803–836 (PPLHMEPISKKPPLRKDKKEKSNMQSERARKEQV) the composition is skewed to basic and acidic residues. Ser-864 is subject to Phosphoserine. A compositionally biased stretch (polar residues) spans 913-930 (INESTHISSSGQNLNTPE). Ser-971 is modified (phosphoserine). The interval 1009–1087 (EGIHSHEGSD…HLNRHLVNVY (79 aa)) is interaction with RCOR1. The C2H2-type 9 zinc finger occupies 1060 to 1082 (FVCIFCDRSFRKGKDYSKHLNRH).

In terms of assembly, isoform 1 and isoform 3 form heterodimers. Isoform 3: Forms homodimers and homooligomers; binds to the neuron-restrictive silencer element (NRSE) as monomer. Interacts with SIN3A, SIN3B and RCOR1. Interacts with CDYL. Interacts with EHMT1 and EHMT2 only in the presence of CDYL. Part of a complex containing at least CDYL, REST, WIZ, SETB1, EHMT1 and EHMT2. Interacts (via zinc-finger DNA-binding domain) with ZFP90 (via N- and C-termini); the interaction inhibits REST repressor activity. Interacts (via C2H2-type zinc finger 5) with PRICKLE1. Interacts with FBXW11 and BTRC. Interacts with USP7. Post-translationally, O-glycosylated. In terms of processing, phosphorylated; phosphorylation is required for ubiquitination. Ubiquitinated; ubiquitination is mediated by BTRC and leads to proteasomal degradation in G2 phase. Ubiquitination increases during neuronal differentiation. Deubiquitinated by USP7; leading to its stabilization and promoting the maintenance of neural progenitor cells. In terms of tissue distribution, expressed in neurons of the prefrontal cortex, in hippocampal pyramidal neurons, dentate gyrus granule neurons and cerebellar Purkinje and granule neurons (at protein level). Expressed in dopaminergic neurons of the substantia nigra (at protein level). Expressed in neural progenitor cells (at protein level). In patients suffering from Alzheimer disease, frontotemporal dementia or dementia with Lewy bodies, decreased nuclear levels have been observed in neurons of the prefrontal cortex and the hippocampus, but not in neurons of the dentate gyrus and cerebellum (at protein level). In patients with Parkinson disease or dementia with Lewy bodies, decreased nuclear levels have been observed in dopaminergic neurons and in cortical neurons and localization to Lewy bodies and pale bodies was detected (at protein level). Expressed at higher levels in weakly invasive breast cancer cell lines and at lower levels in highly invasive breast cancer lines (at protein level). Ubiquitous. Expressed at higher levels in the tissues of the lymphocytic compartment, including spleen, thymus, peripheral blood lymphocytes and ovary.

Its subcellular location is the nucleus. It localises to the cytoplasm. In terms of biological role, transcriptional repressor which binds neuron-restrictive silencer element (NRSE) and represses neuronal gene transcription in non-neuronal cells. Restricts the expression of neuronal genes by associating with two distinct corepressors, SIN3A and RCOR1, which in turn recruit histone deacetylase to the promoters of REST-regulated genes. Mediates repression by recruiting the BHC complex at RE1/NRSE sites which acts by deacetylating and demethylating specific sites on histones, thereby acting as a chromatin modifier. Transcriptional repression by REST-CDYL via the recruitment of histone methyltransferase EHMT2 may be important in transformation suppression. Represses the expression of SRRM4 in non-neural cells to prevent the activation of neural-specific splicing events and to prevent production of REST isoform 3. Repressor activity may be inhibited by forming heterodimers with isoform 3, thereby preventing binding to NRSE or binding to corepressors and leading to derepression of target genes. Also maintains repression of neuronal genes in neural stem cells, and allows transcription and differentiation into neurons by dissociation from RE1/NRSE sites of target genes. Thereby is involved in maintaining the quiescent state of adult neural stem cells and preventing premature differentiation into mature neurons. Plays a role in the developmental switch in synaptic NMDA receptor composition during postnatal development, by repressing GRIN2B expression and thereby altering NMDA receptor properties from containing primarily GRIN2B to primarily GRIN2A subunits. Acts as a regulator of osteoblast differentiation. Key repressor of gene expression in hypoxia; represses genes in hypoxia by direct binding to an RE1/NRSE site on their promoter regions. May also function in stress resistance in the brain during aging; possibly by regulating expression of genes involved in cell death and in the stress response. Repressor of gene expression in the hippocampus after ischemia by directly binding to RE1/NRSE sites and recruiting SIN3A and RCOR1 to promoters of target genes, thereby promoting changes in chromatin modifications and ischemia-induced cell death. After ischemia, might play a role in repression of miR-132 expression in hippocampal neurons, thereby leading to neuronal cell death. Negatively regulates the expression of SRRM3 in breast cancer cell lines. Binds to the 3' region of the neuron-restrictive silencer element (NRSE), with lower affinity than full-length REST isoform 1. Exhibits weaker repressor activity compared to isoform 1. May negatively regulate the repressor activity of isoform 1 by binding to isoform 1, thereby preventing its binding to NRSE and leading to derepression of target genes. However, in another study, does not appear to be implicated in repressor activity of a NRSE motif-containing reporter construct nor in inhibitory activity on the isoform 1 transcriptional repressor activity. Post-transcriptional inactivation of REST by SRRM4-dependent alternative splicing into isoform 3 is required in mechanosensory hair cells in the inner ear for derepression of neuronal genes and hearing. In Homo sapiens (Human), this protein is RE1-silencing transcription factor (REST).